We begin with the raw amino-acid sequence, 366 residues long: Aminomethyltransferase (366 aa).

It belongs to the GcvT family. In terms of assembly, the glycine cleavage system is composed of four proteins: P, T, L and H.

It catalyses the reaction N(6)-[(R)-S(8)-aminomethyldihydrolipoyl]-L-lysyl-[protein] + (6S)-5,6,7,8-tetrahydrofolate = N(6)-[(R)-dihydrolipoyl]-L-lysyl-[protein] + (6R)-5,10-methylene-5,6,7,8-tetrahydrofolate + NH4(+). In terms of biological role, the glycine cleavage system catalyzes the degradation of glycine. The sequence is that of Aminomethyltransferase from Chlorobium chlorochromatii (strain CaD3).